Consider the following 362-residue polypeptide: Cytochrome P450 monooxygenase-like protein avaN (362 aa).

The chain crosses the membrane as a helical span at residues 3 to 23; sequence VILAIFIAAAGCLFSSWRIYW.

Belongs to the cytochrome P450 family.

It localises to the membrane. It functions in the pathway secondary metabolite biosynthesis. Cytochrome P450 monooxygenase-like protein; part of the cluster that mediates the biosynthesis of a highly modified cyclo-arginine-tryptophan dipeptide (cRW). The first step of the pathway is perfornmed by the arginine-containing cyclodipeptide synthase (RCPDS) avaA that acts as the scaffold-generating enzyme and is responsible for formation of the cyclo-Arg-Trp (cRW) diketopiperazine. AvaB then acts as a multifunctional flavoenzyme that is responsible for generating the cyclo-Arg-formylkynurenine DKP, which can be deformylated by avaC. AvaB then further catalyzes an additional N-oxidation followed by cyclization and dehydration. The next step is an N-acetylation of the guanidine group catalyzed by the arginine N-acetyltransferase avaD. The roles of the additional enzymes identified within the ava cluster still have to be determined. The sequence is that of Cytochrome P450 monooxygenase-like protein avaN from Aspergillus versicolor.